Reading from the N-terminus, the 491-residue chain is Glutamate--tRNA ligase (491 aa).

A 'HIGH' region motif is present at residues 10–20 (PSPTGYLHIGG). A 'KMSKS' region motif is present at residues 243–247 (KISKR). Lys-246 contacts ATP.

This sequence belongs to the class-I aminoacyl-tRNA synthetase family. Glutamate--tRNA ligase type 1 subfamily. As to quaternary structure, monomer.

It localises to the cytoplasm. It catalyses the reaction tRNA(Glu) + L-glutamate + ATP = L-glutamyl-tRNA(Glu) + AMP + diphosphate. Functionally, catalyzes the attachment of glutamate to tRNA(Glu) in a two-step reaction: glutamate is first activated by ATP to form Glu-AMP and then transferred to the acceptor end of tRNA(Glu). In Desulfotalea psychrophila (strain LSv54 / DSM 12343), this protein is Glutamate--tRNA ligase.